Consider the following 306-residue polypeptide: MSHPLIPFRANFLRAPRVLSMEIVAPVITTFRGGRLDPELFANHVKNITSKGVDVVFVAGTTGLGPALSLQEKMELTDAATSAARRVIVQVASLNADEAIALAKYAESRGAEAVASLPPYYFPRLSERQIAKYFRDLCSAVSIPVFLYNYPAAVGRDVDARAAKELGCIRGVKDTNESLAHTLAYKRYLPQARVYNGSDSLVFASFAVRLDGVVASSANYLPELLAGIRDAVAAGDIERARSLQFLLDEIVESARHIGYAAAVYELVEIFQGYEAGEPRGPVYPLDPEEKAWLRAAVAKAKSQLRL.

Substrate is bound by residues 61-62 (TT), 148-150 (YNY), and 173-175 (KDT). K173 (schiff-base intermediate with substrate) is an active-site residue.

The protein belongs to the DapA family. KDPG aldolase subfamily. In terms of assembly, homotetramer; dimer of dimers.

It carries out the reaction 2-dehydro-3-deoxy-6-phospho-D-gluconate = D-glyceraldehyde 3-phosphate + pyruvate. It catalyses the reaction 2-dehydro-3-deoxy-D-gluconate = D-glyceraldehyde + pyruvate. The protein operates within carbohydrate acid metabolism; 2-dehydro-3-deoxy-D-gluconate degradation; D-glyceraldehyde 3-phosphate and pyruvate from 2-dehydro-3-deoxy-D-gluconate: step 2/2. Its function is as follows. Involved in the degradation of glucose via the Entner-Doudoroff pathway. Catalyzes the reversible cleavage of 2-keto-3-deoxy-6-phosphogluconate (KDPG) and 2-keto-3-deoxygluconate (KDG) forming pyruvate and glyceraldehyde 3-phosphate or glyceraldehyde, respectively. It is not able to use 2-keto-3-deoxy-6-phosphogalactonate (KDPGal) and 2-keto-3-deoxygalactonate (KDGal) as substrate. The chain is 2-dehydro-3-deoxy-D-gluconate/2-dehydro-3-deoxy-phosphogluconate aldolase (kdgA) from Thermoproteus tenax.